We begin with the raw amino-acid sequence, 182 residues long: Transcription termination/antitermination protein NusG (182 aa).

One can recognise a KOW domain in the interval 131–163 (VGEQVRIKSGPFANQVGEVQEIETDKFKLTVLV).

This sequence belongs to the NusG family.

Its function is as follows. Participates in transcription elongation, termination and antitermination. This is Transcription termination/antitermination protein NusG from Staphylococcus aureus (strain NCTC 8325 / PS 47).